The chain runs to 260 residues: 4-hydroxy-tetrahydrodipicolinate reductase (260 aa).

Residue 12 to 17 participates in NAD(+) binding; it reads GFRGKM. Position 40 (K40) interacts with NADP(+). Residues 92–94 and 118–121 contribute to the NAD(+) site; these read GTT and APNF. Residue H148 is the Proton donor/acceptor of the active site. H149 serves as a coordination point for (S)-2,3,4,5-tetrahydrodipicolinate. K152 serves as the catalytic Proton donor. Residue 158-159 coordinates (S)-2,3,4,5-tetrahydrodipicolinate; that stretch reads GT.

The protein belongs to the DapB family.

The protein resides in the cytoplasm. The enzyme catalyses (S)-2,3,4,5-tetrahydrodipicolinate + NAD(+) + H2O = (2S,4S)-4-hydroxy-2,3,4,5-tetrahydrodipicolinate + NADH + H(+). It carries out the reaction (S)-2,3,4,5-tetrahydrodipicolinate + NADP(+) + H2O = (2S,4S)-4-hydroxy-2,3,4,5-tetrahydrodipicolinate + NADPH + H(+). It functions in the pathway amino-acid biosynthesis; L-lysine biosynthesis via DAP pathway; (S)-tetrahydrodipicolinate from L-aspartate: step 4/4. Functionally, catalyzes the conversion of 4-hydroxy-tetrahydrodipicolinate (HTPA) to tetrahydrodipicolinate. This Lactococcus lactis subsp. lactis (strain IL1403) (Streptococcus lactis) protein is 4-hydroxy-tetrahydrodipicolinate reductase.